The following is a 227-amino-acid chain: Myogenin (227 aa).

Positions aspartate 82–leucine 133 constitute a bHLH domain. Positions glutamine 147–alanine 196 are disordered. A compositionally biased stretch (low complexity) spans alanine 161 to glutamate 175.

In terms of assembly, homodimer and heterodimer. Efficient DNA binding requires dimerization with another bHLH protein.

The protein localises to the nucleus. Its function is as follows. Acts as a transcriptional activator that promotes transcription of muscle-specific target genes and plays a role in muscle differentiation. Induces fibroblasts to differentiate into myoblasts. Probable sequence specific DNA-binding protein. The sequence is that of Myogenin (MYOG) from Gallus gallus (Chicken).